A 975-amino-acid polypeptide reads, in one-letter code: Glycine dehydrogenase (decarboxylating) (975 aa).

K723 carries the post-translational modification N6-(pyridoxal phosphate)lysine.

This sequence belongs to the GcvP family. The glycine cleavage system is composed of four proteins: P, T, L and H. Pyridoxal 5'-phosphate serves as cofactor.

The catalysed reaction is N(6)-[(R)-lipoyl]-L-lysyl-[glycine-cleavage complex H protein] + glycine + H(+) = N(6)-[(R)-S(8)-aminomethyldihydrolipoyl]-L-lysyl-[glycine-cleavage complex H protein] + CO2. Its function is as follows. The glycine cleavage system catalyzes the degradation of glycine. The P protein binds the alpha-amino group of glycine through its pyridoxal phosphate cofactor; CO(2) is released and the remaining methylamine moiety is then transferred to the lipoamide cofactor of the H protein. The chain is Glycine dehydrogenase (decarboxylating) from Burkholderia ambifaria (strain ATCC BAA-244 / DSM 16087 / CCUG 44356 / LMG 19182 / AMMD) (Burkholderia cepacia (strain AMMD)).